We begin with the raw amino-acid sequence, 542 residues long: Zinc finger protein 280A (542 aa).

The tract at residues 66-185 is disordered; the sequence is VTPGSNSRRK…RDSKRVKLRD (120 aa). A compositionally biased stretch (polar residues) spans 107 to 122; it reads EGRSTDSPVTMKSSSE. Residues 128–143 are compositionally biased toward low complexity; sequence SSPQVVSPSSSDSLPP. The span at 161–185 shows a compositional bias: basic and acidic residues; it reads SSPDSKRLSTSDINSRDSKRVKLRD. 4 C2H2-type zinc fingers span residues 334 to 357, 364 to 387, 423 to 445, and 451 to 474; these read TTCQ…DSVH, AVCK…KDHH, LLCL…CWRH, and LQCS…TKDH. Positions 499 to 520 are enriched in polar residues; it reads QPGSSGMASVIVSNTDPQSSPV. A disordered region spans residues 499-542; the sequence is QPGSSGMASVIVSNTDPQSSPVKTKKKTAMNTRDSRLPCSKDSS.

Its subcellular location is the nucleus. May function as a transcription factor. The sequence is that of Zinc finger protein 280A (ZNF280A) from Homo sapiens (Human).